Here is a 126-residue protein sequence, read N- to C-terminus: Histone H2B type 1-M (126 aa).

A disordered region spans residues 1–36 (MPEPVKSAPVPKKGSKKAINKAQKKDGKKRKRSRKE). P2 is modified (N-acetylproline). E3 carries the post-translational modification ADP-ribosyl glutamic acid. Position 6 is an N6-(2-hydroxyisobutyryl)lysine; alternate (K6). K6 is modified (N6-(beta-hydroxybutyryl)lysine; alternate). An N6-acetyllysine; alternate modification is found at K6. K6 is subject to N6-butyryllysine; alternate. An N6-crotonyllysine; alternate modification is found at K6. Position 6 is an N6-lactoyllysine; alternate (K6). K6 participates in a covalent cross-link: Glycyl lysine isopeptide (Lys-Gly) (interchain with G-Cter in SUMO2); alternate. At S7 the chain carries ADP-ribosylserine. Position 12 is an N6-(beta-hydroxybutyryl)lysine; alternate (K12). N6-acetyllysine; alternate is present on residues K12 and K13. 2 positions are modified to N6-crotonyllysine; alternate: K12 and K13. Residue K12 is modified to N6-lactoyllysine; alternate. Residue K13 is modified to N6-(2-hydroxyisobutyryl)lysine; alternate. Phosphoserine; by STK4/MST1 is present on S15. 4 positions are modified to N6-acetyllysine; alternate: K16, K17, K21, and K24. N6-crotonyllysine; alternate is present on residues K16, K17, K21, and K24. 4 positions are modified to N6-lactoyllysine; alternate: K16, K17, K21, and K24. 2 positions are modified to N6-(beta-hydroxybutyryl)lysine; alternate: K17 and K21. At K17 the chain carries N6-glutaryllysine; alternate. N6-(2-hydroxyisobutyryl)lysine; alternate is present on residues K21 and K24. At K21 the chain carries N6-butyryllysine; alternate. K21 is covalently cross-linked (Glycyl lysine isopeptide (Lys-Gly) (interchain with G-Cter in SUMO2); alternate). Position 25 is an N6-(2-hydroxyisobutyryl)lysine (K25). Residue K35 is modified to N6-(2-hydroxyisobutyryl)lysine; alternate. N6-(beta-hydroxybutyryl)lysine; alternate is present on K35. K35 is modified (N6-crotonyllysine; alternate). The residue at position 35 (K35) is an N6-glutaryllysine; alternate. The residue at position 35 (K35) is an N6-succinyllysine; alternate. A Glycyl lysine isopeptide (Lys-Gly) (interchain with G-Cter in ubiquitin); alternate cross-link involves residue K35. Position 36 is a polyADP-ribosyl glutamic acid (E36). A Phosphoserine; by AMPK modification is found at S37. K44, K47, and K58 each carry N6-(2-hydroxyisobutyryl)lysine; alternate. The residue at position 44 (K44) is an N6-lactoyllysine; alternate. 2 positions are modified to N6-glutaryllysine; alternate: K44 and K47. K47 is subject to N6-methyllysine; alternate. Residue K58 is modified to N6,N6-dimethyllysine; alternate. R80 is subject to Dimethylated arginine. K86 carries the post-translational modification N6-(2-hydroxyisobutyryl)lysine; alternate. K86 is subject to N6-(beta-hydroxybutyryl)lysine; alternate. Position 86 is an N6-acetyllysine; alternate (K86). Residue K86 is modified to N6-lactoyllysine; alternate. K86 carries the post-translational modification N6,N6,N6-trimethyllysine; alternate. 2 positions are modified to omega-N-methylarginine: R87 and R93. N6-(2-hydroxyisobutyryl)lysine; alternate is present on K109. K109 is subject to N6-lactoyllysine; alternate. At K109 the chain carries N6-glutaryllysine; alternate. K109 is modified (N6-methyllysine; alternate). An O-linked (GlcNAc) serine glycan is attached at S113. At T116 the chain carries Phosphothreonine. K117 and K121 each carry N6-(2-hydroxyisobutyryl)lysine; alternate. 2 positions are modified to N6-(beta-hydroxybutyryl)lysine; alternate: K117 and K121. An N6-lactoyllysine; alternate mark is found at K117 and K121. An N6-glutaryllysine; alternate mark is found at K117 and K121. N6-succinyllysine; alternate is present on residues K117 and K121. The residue at position 117 (K117) is an N6-malonyllysine; alternate. Position 117 is an N6-methylated lysine; alternate (K117). K121 is covalently cross-linked (Glycyl lysine isopeptide (Lys-Gly) (interchain with G-Cter in ubiquitin); alternate).

This sequence belongs to the histone H2B family. As to quaternary structure, the nucleosome is a histone octamer containing two molecules each of H2A, H2B, H3 and H4 assembled in one H3-H4 heterotetramer and two H2A-H2B heterodimers. The octamer wraps approximately 147 bp of DNA. In terms of processing, monoubiquitination at Lys-35 (H2BK34Ub) by the MSL1/MSL2 dimer is required for histone H3 'Lys-4' (H3K4me) and 'Lys-79' (H3K79me) methylation and transcription activation at specific gene loci, such as HOXA9 and MEIS1 loci. Similarly, monoubiquitination at Lys-121 (H2BK120Ub) by the RNF20/40 complex gives a specific tag for epigenetic transcriptional activation and is also prerequisite for histone H3 'Lys-4' and 'Lys-79' methylation. It also functions cooperatively with the FACT dimer to stimulate elongation by RNA polymerase II. H2BK120Ub also acts as a regulator of mRNA splicing: deubiquitination by USP49 is required for efficient cotranscriptional splicing of a large set of exons. Phosphorylation at Ser-37 (H2BS36ph) by AMPK in response to stress promotes transcription. Phosphorylated on Ser-15 (H2BS14ph) by STK4/MST1 during apoptosis; which facilitates apoptotic chromatin condensation. Also phosphorylated on Ser-15 in response to DNA double strand breaks (DSBs), and in correlation with somatic hypermutation and immunoglobulin class-switch recombination. Post-translationally, glcNAcylation at Ser-113 promotes monoubiquitination of Lys-121. It fluctuates in response to extracellular glucose, and associates with transcribed genes. In terms of processing, ADP-ribosylated by PARP1 or PARP2 on Ser-7 (H2BS6ADPr) in response to DNA damage. H2BS6ADPr promotes recruitment of CHD1L. Mono-ADP-ribosylated on Glu-3 (H2BE2ADPr) by PARP3 in response to single-strand breaks. Poly ADP-ribosylation on Glu-36 (H2BE35ADPr) by PARP1 regulates adipogenesis: it inhibits phosphorylation at Ser-37 (H2BS36ph), thereby blocking expression of pro-adipogenetic genes. Crotonylation (Kcr) is specifically present in male germ cells and marks testis-specific genes in post-meiotic cells, including X-linked genes that escape sex chromosome inactivation in haploid cells. Crotonylation marks active promoters and enhancers and confers resistance to transcriptional repressors. It is also associated with post-meiotically activated genes on autosomes. Post-translationally, lactylated in macrophages by EP300/P300 by using lactoyl-CoA directly derived from endogenous or exogenous lactate, leading to stimulates gene transcription.

Its subcellular location is the nucleus. It localises to the chromosome. In terms of biological role, core component of nucleosome. Nucleosomes wrap and compact DNA into chromatin, limiting DNA accessibility to the cellular machineries which require DNA as a template. Histones thereby play a central role in transcription regulation, DNA repair, DNA replication and chromosomal stability. DNA accessibility is regulated via a complex set of post-translational modifications of histones, also called histone code, and nucleosome remodeling. This Homo sapiens (Human) protein is Histone H2B type 1-M.